The following is an 85-amino-acid chain: Small ribosomal subunit protein uS17 (85 aa).

This sequence belongs to the universal ribosomal protein uS17 family. In terms of assembly, part of the 30S ribosomal subunit.

Its function is as follows. One of the primary rRNA binding proteins, it binds specifically to the 5'-end of 16S ribosomal RNA. In Mesoplasma florum (strain ATCC 33453 / NBRC 100688 / NCTC 11704 / L1) (Acholeplasma florum), this protein is Small ribosomal subunit protein uS17.